The sequence spans 557 residues: Tight junction-associated protein 1 (557 aa).

The segment at 1–37 (MTSAAPAKKPYRKAPPEHRELRLEIPGSRLEQEEPLT) is disordered. The residue at position 2 (Thr-2) is an N-acetylthreonine. Positions 14–23 (APPEHRELRL) are enriched in basic and acidic residues. Positions 42 to 171 (MKLLQEENEE…EELNERYRLD (130 aa)) form a coiled coil. 2 disordered regions span residues 266-303 (MSEG…SPEE) and 309-328 (AFEK…LYPG). Over residues 274-286 (PASPPAPGSPTPQ) the composition is skewed to pro residues. At Ser-300 the chain carries Phosphoserine. A compositionally biased stretch (pro residues) spans 316–325 (YPTPSPPHPL). Thr-318 carries the phosphothreonine modification. Phosphoserine is present on residues Ser-320 and Ser-345. The segment at 364–409 (EEGSERARPSPVPSTPASAQASPHHQPSPAPLTLSAPASSASSEED) is disordered. Polar residues predominate over residues 378–388 (TPASAQASPHH). The segment covering 394–405 (PLTLSAPASSAS) has biased composition (low complexity). Thr-422 is modified (phosphothreonine). Over residues 439–456 (LPELQRHFAHSPADRDEV) the composition is skewed to basic and acidic residues. A disordered region spans residues 439-557 (LPELQRHFAH…QAQEQGNLLN (119 aa)). Phosphoserine is present on Ser-491. Positions 530–542 (RSPKRMGVHHLHR) are enriched in basic residues. Ser-545 is subject to Phosphoserine. Polar residues predominate over residues 546–557 (LTQAQEQGNLLN).

Interacts with DLG1. Interacts with ARF6 (GTP-bound form). As to expression, ubiquitously expressed.

The protein resides in the golgi apparatus. The protein localises to the trans-Golgi network. It localises to the cell junction. Its subcellular location is the tight junction. It is found in the cell membrane. In terms of biological role, plays a role in regulating the structure of the Golgi apparatus. The polypeptide is Tight junction-associated protein 1 (Homo sapiens (Human)).